Consider the following 270-residue polypeptide: Formamidopyrimidine-DNA glycosylase (270 aa).

Pro-2 (schiff-base intermediate with DNA) is an active-site residue. Glu-3 acts as the Proton donor in catalysis. Lys-57 functions as the Proton donor; for beta-elimination activity in the catalytic mechanism. DNA-binding residues include His-90, Arg-109, and Arg-151. The segment at 236-270 (QVYGRGGKLCMVCSNRLKEVRLGQRSTVYCTQCQR) adopts an FPG-type zinc-finger fold. The active-site Proton donor; for delta-elimination activity is Arg-260.

It belongs to the FPG family. Monomer. Zn(2+) serves as cofactor.

The catalysed reaction is Hydrolysis of DNA containing ring-opened 7-methylguanine residues, releasing 2,6-diamino-4-hydroxy-5-(N-methyl)formamidopyrimidine.. It catalyses the reaction 2'-deoxyribonucleotide-(2'-deoxyribose 5'-phosphate)-2'-deoxyribonucleotide-DNA = a 3'-end 2'-deoxyribonucleotide-(2,3-dehydro-2,3-deoxyribose 5'-phosphate)-DNA + a 5'-end 5'-phospho-2'-deoxyribonucleoside-DNA + H(+). Its function is as follows. Involved in base excision repair of DNA damaged by oxidation or by mutagenic agents. Acts as a DNA glycosylase that recognizes and removes damaged bases. Has a preference for oxidized purines, such as 7,8-dihydro-8-oxoguanine (8-oxoG). Has AP (apurinic/apyrimidinic) lyase activity and introduces nicks in the DNA strand. Cleaves the DNA backbone by beta-delta elimination to generate a single-strand break at the site of the removed base with both 3'- and 5'-phosphates. The protein is Formamidopyrimidine-DNA glycosylase of Idiomarina loihiensis (strain ATCC BAA-735 / DSM 15497 / L2-TR).